Consider the following 51-residue polypeptide: Ribosome biogenesis protein Nop10 (51 aa).

Belongs to the NOP10 family.

Its function is as follows. Involved in ribosome biogenesis; more specifically in 18S rRNA pseudouridylation and in cleavage of pre-rRNA. This chain is Ribosome biogenesis protein Nop10, found in Methanococcus maripaludis (strain C7 / ATCC BAA-1331).